Reading from the N-terminus, the 513-residue chain is Maturase K (513 aa).

The protein belongs to the intron maturase 2 family. MatK subfamily.

Its subcellular location is the plastid. It localises to the chloroplast. In terms of biological role, usually encoded in the trnK tRNA gene intron. Probably assists in splicing its own and other chloroplast group II introns. This chain is Maturase K, found in Cynodon dactylon (Bermuda grass).